A 971-amino-acid polypeptide reads, in one-letter code: Exportin-2 (971 aa).

Residues 29-102 (AEKFLESVEG…KANIVNLMLT (74 aa)) enclose the Importin N-terminal domain.

This sequence belongs to the XPO2/CSE1 family. Interacts with cftr. As to expression, detected in larval gut, liver, exocrine pancreas and part of the brain and retina at 96 hpf.

It is found in the cytoplasm. Its subcellular location is the nucleus. It localises to the apical cell membrane. The protein localises to the basal cell membrane. The protein resides in the lateral cell membrane. Functionally, export receptor for importin alpha. Mediates importin-alpha re-export from the nucleus to the cytoplasm after import substrates have been released into the nucleoplasm. Negatively regulates fluid secretion and plays a role in fluid homeostasis by down-regulating cftr activity. In Danio rerio (Zebrafish), this protein is Exportin-2 (cse1l).